Here is a 1066-residue protein sequence, read N- to C-terminus: Beta-galactosidase (1066 aa).

Residues N110 and D209 each contribute to the substrate site. A Na(+)-binding site is contributed by D209. The Mg(2+) site is built by E432, H434, and E477. Residues E477 and 553–556 (EYAH) contribute to the substrate site. The Proton donor role is filled by E477. Catalysis depends on E553, which acts as the Nucleophile. N613 lines the Mg(2+) pocket. 2 residues coordinate Na(+): F617 and N620. Substrate contacts are provided by N620 and W1041.

Belongs to the glycosyl hydrolase 2 family. In terms of assembly, homotetramer. Mg(2+) is required as a cofactor. The cofactor is Na(+).

The enzyme catalyses Hydrolysis of terminal non-reducing beta-D-galactose residues in beta-D-galactosides.. The sequence is that of Beta-galactosidase from Yersinia pseudotuberculosis serotype IB (strain PB1/+).